We begin with the raw amino-acid sequence, 295 residues long: Phosphoribosylaminoimidazole-succinocarboxamide synthase (295 aa).

The protein belongs to the SAICAR synthetase family.

It catalyses the reaction 5-amino-1-(5-phospho-D-ribosyl)imidazole-4-carboxylate + L-aspartate + ATP = (2S)-2-[5-amino-1-(5-phospho-beta-D-ribosyl)imidazole-4-carboxamido]succinate + ADP + phosphate + 2 H(+). It functions in the pathway purine metabolism; IMP biosynthesis via de novo pathway; 5-amino-1-(5-phospho-D-ribosyl)imidazole-4-carboxamide from 5-amino-1-(5-phospho-D-ribosyl)imidazole-4-carboxylate: step 1/2. The chain is Phosphoribosylaminoimidazole-succinocarboxamide synthase from Desulforapulum autotrophicum (strain ATCC 43914 / DSM 3382 / VKM B-1955 / HRM2) (Desulfobacterium autotrophicum).